The primary structure comprises 296 residues: Ethanolamine ammonia-lyase small subunit (296 aa).

Adenosylcob(III)alamin-binding residues include V209 and E230.

Belongs to the EutC family. In terms of assembly, the basic unit is a heterodimer which dimerizes to form tetramers. The heterotetramers trimerize; 6 large subunits form a core ring with 6 small subunits projecting outwards. Adenosylcob(III)alamin serves as cofactor.

It is found in the bacterial microcompartment. It carries out the reaction ethanolamine = acetaldehyde + NH4(+). The protein operates within amine and polyamine degradation; ethanolamine degradation. Catalyzes the deamination of various vicinal amino-alcohols to oxo compounds. Allows this organism to utilize ethanolamine as the sole source of nitrogen and carbon in the presence of external vitamin B12. This is Ethanolamine ammonia-lyase small subunit from Lachnoclostridium phytofermentans (strain ATCC 700394 / DSM 18823 / ISDg) (Clostridium phytofermentans).